A 537-amino-acid chain; its full sequence is Chaperonin GroEL (537 aa).

ATP contacts are provided by residues 29–32 (TLGP), 86–90 (DGTTT), Gly413, and Asp492.

The protein belongs to the chaperonin (HSP60) family. In terms of assembly, forms a cylinder of 14 subunits composed of two heptameric rings stacked back-to-back. Interacts with the co-chaperonin GroES.

It localises to the cytoplasm. It catalyses the reaction ATP + H2O + a folded polypeptide = ADP + phosphate + an unfolded polypeptide.. Its function is as follows. Together with its co-chaperonin GroES, plays an essential role in assisting protein folding. The GroEL-GroES system forms a nano-cage that allows encapsulation of the non-native substrate proteins and provides a physical environment optimized to promote and accelerate protein folding. The polypeptide is Chaperonin GroEL (Dehalococcoides mccartyi (strain ATCC BAA-2266 / KCTC 15142 / 195) (Dehalococcoides ethenogenes (strain 195))).